The following is a 611-amino-acid chain: Putative clathrin assembly protein At4g02650 (611 aa).

The ENTH domain occupies 26–162 (GRSSSLTELE…DYRMQGRRGK (137 aa)). Disordered regions lie at residues 158–184 (GRRGKKKSGGGGGGDGDSGEEDDHRGT) and 337–406 (TTKS…GDLL). Basic and acidic residues predominate over residues 386 to 401 (METKKDVEEVVSRQDQ).

It is found in the membrane. Its subcellular location is the clathrin-coated pit. It localises to the golgi apparatus. The protein localises to the cytoplasmic vesicle. The protein resides in the clathrin-coated vesicle. The sequence is that of Putative clathrin assembly protein At4g02650 from Arabidopsis thaliana (Mouse-ear cress).